Here is a 222-residue protein sequence, read N- to C-terminus: UPF0758 protein Ppha_0935 (222 aa).

Residues 100-222 (KIQAARDVFE…CFSFRESGLL (123 aa)) form the MPN domain. His-171, His-173, and Asp-184 together coordinate Zn(2+). The JAMM motif signature appears at 171–184 (HNHPSGDVEPSNAD).

The protein belongs to the UPF0758 family.

This Pelodictyon phaeoclathratiforme (strain DSM 5477 / BU-1) protein is UPF0758 protein Ppha_0935.